The primary structure comprises 178 residues: ATP synthase subunit delta (178 aa).

Belongs to the ATPase delta chain family. In terms of assembly, F-type ATPases have 2 components, F(1) - the catalytic core - and F(0) - the membrane proton channel. F(1) has five subunits: alpha(3), beta(3), gamma(1), delta(1), epsilon(1). F(0) has three main subunits: a(1), b(2) and c(10-14). The alpha and beta chains form an alternating ring which encloses part of the gamma chain. F(1) is attached to F(0) by a central stalk formed by the gamma and epsilon chains, while a peripheral stalk is formed by the delta and b chains.

Its subcellular location is the cell inner membrane. F(1)F(0) ATP synthase produces ATP from ADP in the presence of a proton or sodium gradient. F-type ATPases consist of two structural domains, F(1) containing the extramembraneous catalytic core and F(0) containing the membrane proton channel, linked together by a central stalk and a peripheral stalk. During catalysis, ATP synthesis in the catalytic domain of F(1) is coupled via a rotary mechanism of the central stalk subunits to proton translocation. Functionally, this protein is part of the stalk that links CF(0) to CF(1). It either transmits conformational changes from CF(0) to CF(1) or is implicated in proton conduction. The protein is ATP synthase subunit delta of Cellvibrio japonicus (strain Ueda107) (Pseudomonas fluorescens subsp. cellulosa).